A 537-amino-acid polypeptide reads, in one-letter code: Hexosyltransferase GAUT11 (537 aa).

Over 1 to 16 the chain is Cytoplasmic; the sequence is MRRWPVDHRRRGRRRL. A helical; Signal-anchor for type II membrane protein membrane pass occupies residues 17 to 37; it reads SSWIWFLLGSFSVAGLVLFIV. Over 38 to 537 the chain is Lumenal; the sequence is QHYHHQQDPS…HPYLQDCVTA (500 aa). N-linked (GlcNAc...) asparagine glycans are attached at residues Asn-66, Asn-247, Asn-299, Asn-403, Asn-436, and Asn-525.

The protein belongs to the glycosyltransferase 8 family. In terms of assembly, monomer. As to expression, expressed in roots, inflorescences, siliques, seeds, leaves and stems.

The protein localises to the golgi apparatus membrane. It catalyses the reaction [(1-&gt;4)-alpha-D-galacturonosyl](n) + UDP-alpha-D-galacturonate = [(1-&gt;4)-alpha-D-galacturonosyl](n+1) + UDP + H(+). It functions in the pathway glycan metabolism; pectin biosynthesis. Glycosyltransferase involved in pectin and/or xylans biosynthesis in cell walls. Required for the biosynthesis of pectin in seed coat epidermal (SCE) cells. Collaboratively with MUCI70, essential for the accumulation of seed mucilage, a gelatinous wall rich in unbranched rhamnogalacturonan I (RG I), and for shaping the surface morphology of seeds. Catalyzes homogalacturonan (HG) elongation by acting as an HG alpha-1,4 galacturonic acid transferase. The polypeptide is Hexosyltransferase GAUT11 (Arabidopsis thaliana (Mouse-ear cress)).